The primary structure comprises 89 residues: Sec-independent protein translocase protein TatA (89 aa).

A helical transmembrane segment spans residues 1-21 (MGGISIWQLLIIALIVVLLFG). Basic and acidic residues predominate over residues 47–61 (EEKKALEENATDKPA). The interval 47–89 (EEKKALEENATDKPAADTAKVTETAKVAETAEKKAESKGKEQA) is disordered. Residues 62 to 74 (ADTAKVTETAKVA) are compositionally biased toward low complexity. The span at 75–89 (ETAEKKAESKGKEQA) shows a compositional bias: basic and acidic residues.

The protein belongs to the TatA/E family. The Tat system comprises two distinct complexes: a TatABC complex, containing multiple copies of TatA, TatB and TatC subunits, and a separate TatA complex, containing only TatA subunits. Substrates initially bind to the TatABC complex, which probably triggers association of the separate TatA complex to form the active translocon.

The protein localises to the cell inner membrane. Functionally, part of the twin-arginine translocation (Tat) system that transports large folded proteins containing a characteristic twin-arginine motif in their signal peptide across membranes. TatA could form the protein-conducting channel of the Tat system. This is Sec-independent protein translocase protein TatA from Shewanella pealeana (strain ATCC 700345 / ANG-SQ1).